A 301-amino-acid polypeptide reads, in one-letter code: Tyrosine recombinase XerD (301 aa).

The region spanning 6–89 (PLHQQLIEQF…ALKVFFHFLK (84 aa)) is the Core-binding (CB) domain. One can recognise a Tyr recombinase domain in the interval 108–293 (RLPSILSTEE…ASESIIEKFH (186 aa)). Active-site residues include Arg152, Lys174, His245, Arg248, and His271. The active-site O-(3'-phospho-DNA)-tyrosine intermediate is Tyr280.

The protein belongs to the 'phage' integrase family. XerD subfamily. Forms a cyclic heterotetrameric complex composed of two molecules of XerC and two molecules of XerD.

The protein localises to the cytoplasm. Functionally, site-specific tyrosine recombinase, which acts by catalyzing the cutting and rejoining of the recombining DNA molecules. The XerC-XerD complex is essential to convert dimers of the bacterial chromosome into monomers to permit their segregation at cell division. It also contributes to the segregational stability of plasmids. The chain is Tyrosine recombinase XerD from Chlamydia muridarum (strain MoPn / Nigg).